Reading from the N-terminus, the 95-residue chain is Cytochrome b (95 aa).

A run of 3 helical transmembrane segments spans residues 1–16, 40–61, and 76–95; these read GLCL…FLAM, WLIR…YLHI, and WNIG…VGYV. His46 and His60 together coordinate heme b.

The protein belongs to the cytochrome b family. In terms of assembly, the cytochrome bc1 complex contains 3 respiratory subunits (MT-CYB, CYC1 and UQCRFS1), 2 core proteins (UQCRC1 and UQCRC2) and probably 6 low-molecular weight proteins. The cofactor is heme b.

Its subcellular location is the mitochondrion inner membrane. In terms of biological role, component of the ubiquinol-cytochrome c reductase complex (complex III or cytochrome b-c1 complex) that is part of the mitochondrial respiratory chain. The b-c1 complex mediates electron transfer from ubiquinol to cytochrome c. Contributes to the generation of a proton gradient across the mitochondrial membrane that is then used for ATP synthesis. This is Cytochrome b (mt-cyb) from Gomphosus varius (Bird wrasse).